Consider the following 274-residue polypeptide: Ribosomal RNA small subunit methyltransferase A (274 aa).

S-adenosyl-L-methionine is bound by residues Asn26, Leu28, Gly53, Glu74, Asp94, and Asn114.

The protein belongs to the class I-like SAM-binding methyltransferase superfamily. rRNA adenine N(6)-methyltransferase family. RsmA subfamily.

The protein resides in the cytoplasm. The catalysed reaction is adenosine(1518)/adenosine(1519) in 16S rRNA + 4 S-adenosyl-L-methionine = N(6)-dimethyladenosine(1518)/N(6)-dimethyladenosine(1519) in 16S rRNA + 4 S-adenosyl-L-homocysteine + 4 H(+). Its function is as follows. Specifically dimethylates two adjacent adenosines (A1518 and A1519) in the loop of a conserved hairpin near the 3'-end of 16S rRNA in the 30S particle. May play a critical role in biogenesis of 30S subunits. The protein is Ribosomal RNA small subunit methyltransferase A of Bdellovibrio bacteriovorus (strain ATCC 15356 / DSM 50701 / NCIMB 9529 / HD100).